The primary structure comprises 624 residues: Actin-related protein 8 (624 aa).

N-acetylmethionine is present on Met1. Residues 1-25 are compositionally biased toward basic and acidic residues; sequence MTQAEKGDAENGKEKGGEKEKEQRG. The segment at 1–29 is disordered; that stretch reads MTQAEKGDAENGKEKGGEKEKEQRGVKRP. 2 residues coordinate ATP: Ser55 and Thr56. A Phosphoserine modification is found at Ser132. 283 to 286 contacts ATP; it reads DVGD. Ser412 carries the phosphoserine modification. Residues 430 to 462 are disordered; sequence SKQEQSAKATADRKSASKPIGFEGDLRGQSSDL.

This sequence belongs to the actin family. ARP8 subfamily. Component of the chromatin remodeling INO80 complex; specifically part of a complex module associated with the DBINO domain of INO80. Exists as monomers and dimers, but the dimer is most probably the biologically relevant form required for stable interactions with histones that exploits the twofold symmetry of the nucleosome core.

It is found in the nucleus. The protein localises to the chromosome. Its function is as follows. Plays an important role in the functional organization of mitotic chromosomes. Exhibits low basal ATPase activity, and unable to polymerize. In terms of biological role, proposed core component of the chromatin remodeling INO80 complex which is involved in transcriptional regulation, DNA replication and probably DNA repair. Required for the recruitment of INO80 (and probably the INO80 complex) to sites of DNA damage Strongly prefer nucleosomes and H3-H4 tetramers over H2A-H2B dimers, suggesting it may act as a nucleosome recognition module within the complex. This is Actin-related protein 8 (Actr8) from Mus musculus (Mouse).